Reading from the N-terminus, the 527-residue chain is Peptide chain release factor 3 (527 aa).

The tr-type G domain maps to 9-277 (AKRRTFAIIS…CIVDWAPQPL (269 aa)). GTP contacts are provided by residues 18-25 (SHPDAGKT), 86-90 (DTPGH), and 140-143 (NKLD).

This sequence belongs to the TRAFAC class translation factor GTPase superfamily. Classic translation factor GTPase family. PrfC subfamily.

The protein resides in the cytoplasm. In terms of biological role, increases the formation of ribosomal termination complexes and stimulates activities of RF-1 and RF-2. It binds guanine nucleotides and has strong preference for UGA stop codons. It may interact directly with the ribosome. The stimulation of RF-1 and RF-2 is significantly reduced by GTP and GDP, but not by GMP. In Pseudomonas aeruginosa (strain LESB58), this protein is Peptide chain release factor 3.